A 357-amino-acid chain; its full sequence is Sorbitol dehydrogenase (357 aa).

The residue at position 2 (A2) is an N-acetylalanine. Residue C45 participates in Zn(2+) binding. Y51 provides a ligand contact to substrate. Residues H70, E71, and E156 each contribute to the Zn(2+) site. E156 is a binding site for substrate. S169 carries the phosphoserine modification. Residues I184, D204, R209, 273–275 (VGM), and 297–299 (VFR) each bind NAD(+). R299 and Y300 together coordinate substrate.

The protein belongs to the zinc-containing alcohol dehydrogenase family. In terms of assembly, homotetramer; dimer of dimers. Requires Zn(2+) as cofactor. In terms of tissue distribution, expressed in liver and testis.

The protein localises to the mitochondrion membrane. Its subcellular location is the cell projection. The protein resides in the cilium. It localises to the flagellum. It carries out the reaction keto-D-fructose + NADH + H(+) = D-sorbitol + NAD(+). The enzyme catalyses xylitol + NAD(+) = D-xylulose + NADH + H(+). The catalysed reaction is L-iditol + NAD(+) = keto-L-sorbose + NADH + H(+). Functionally, polyol dehydrogenase that catalyzes the reversible NAD(+)-dependent oxidation of various sugar alcohols. Is active with D-sorbitol (D-glucitol) leading to the C2-oxidized product D-fructose. Is a key enzyme in the polyol pathway that interconverts glucose and fructose via sorbitol, which constitutes an important alternate route for glucose metabolism. May play a role in sperm motility by using sorbitol as an alternative energy source for sperm motility. The protein is Sorbitol dehydrogenase (Sord) of Rattus norvegicus (Rat).